The sequence spans 509 residues: Transmembrane protein 102 (509 aa).

The Extracellular segment spans residues 1-312 (MASTVWGGAP…VLLATPEPPR (312 aa)). The disordered stretch occupies residues 167–236 (PPVPEESDMT…NPETPEPLET (70 aa)). Over residues 174 to 204 (DMTHQTHSKESPTDRENSVDPSHDYVPEPEP) the composition is skewed to basic and acidic residues. Low complexity predominate over residues 207–224 (SLQKSSSDLSESQSSYKD). A helical membrane pass occupies residues 313-329 (HLLLFDLIPVVTVTGWP). Residues 330–509 (DTARSHSWAG…GLAGVGGGTH (180 aa)) are Cytoplasmic-facing.

As to quaternary structure, interacts with CSF2RB; this interaction occurs preferentially in the absence of CSF2.

The protein localises to the cell membrane. Selectively involved in CSF2 deprivation-induced apoptosis via a mitochondria-dependent pathway. This Mus musculus (Mouse) protein is Transmembrane protein 102 (Tmem102).